Reading from the N-terminus, the 156-residue chain is Cytochrome c-type biogenesis protein CcmE 1 (156 aa).

At 1-8 (MNATRRQR) the chain is on the cytoplasmic side. A helical; Signal-anchor for type II membrane protein membrane pass occupies residues 9-29 (LWWVICVLTAAALAVTLIVFA). Residues 30–156 (LQRNMSYLFT…ATATPLTAPR (127 aa)) lie on the Periplasmic side of the membrane. 2 residues coordinate heme: His-123 and Tyr-127. Residues 137 to 156 (AEGHAGKPIPATATPLTAPR) are disordered. A compositionally biased stretch (low complexity) spans 146-156 (PATATPLTAPR).

Belongs to the CcmE/CycJ family.

The protein localises to the cell inner membrane. Its function is as follows. Heme chaperone required for the biogenesis of c-type cytochromes. Transiently binds heme delivered by CcmC and transfers the heme to apo-cytochromes in a process facilitated by CcmF and CcmH. This Xanthomonas euvesicatoria pv. vesicatoria (strain 85-10) (Xanthomonas campestris pv. vesicatoria) protein is Cytochrome c-type biogenesis protein CcmE 1.